A 317-amino-acid polypeptide reads, in one-letter code: SURF1-like protein (317 aa).

Transmembrane regions (helical) follow at residues 78–98 (GSIL…WQIY) and 293–313 (HMNY…MWIH).

It belongs to the SURF1 family.

The protein localises to the mitochondrion inner membrane. Functionally, probably involved in the biogenesis of the COX complex. This Caenorhabditis briggsae protein is SURF1-like protein (sft-1).